A 347-amino-acid polypeptide reads, in one-letter code: NAD-dependent alcohol dehydrogenase (347 aa).

The residue at position 11 (K11) is an N6-methyllysine. C38, H68, E98, C101, C104, C112, and C154 together coordinate Zn(2+). K213 bears the N6-methyllysine mark.

It belongs to the zinc-containing alcohol dehydrogenase family. As to quaternary structure, homodimer and homotetramer. Zn(2+) serves as cofactor.

It carries out the reaction a primary alcohol + NAD(+) = an aldehyde + NADH + H(+). The enzyme catalyses a secondary alcohol + NAD(+) = a ketone + NADH + H(+). The polypeptide is NAD-dependent alcohol dehydrogenase (adh) (Sulfurisphaera tokodaii (strain DSM 16993 / JCM 10545 / NBRC 100140 / 7) (Sulfolobus tokodaii)).